The primary structure comprises 316 residues: L-lactate dehydrogenase (316 aa).

Residues Val-15, Asp-37, Lys-42, Tyr-68, and 82–83 (GL) contribute to the NAD(+) site. Substrate contacts are provided by residues Gln-85, Arg-91, and 123-126 (NPVD). Residues 121-123 (ASN) and Thr-146 contribute to the NAD(+) site. A substrate-binding site is contributed by 151–154 (DTSR). Residues Arg-156 and His-171 each contribute to the beta-D-fructose 1,6-bisphosphate site. The Proton acceptor role is filled by His-178. Tyr-222 is modified (phosphotyrosine). Thr-231 is a substrate binding site.

The protein belongs to the LDH/MDH superfamily. LDH family. In terms of assembly, homotetramer.

The protein resides in the cytoplasm. It catalyses the reaction (S)-lactate + NAD(+) = pyruvate + NADH + H(+). The protein operates within fermentation; pyruvate fermentation to lactate; (S)-lactate from pyruvate: step 1/1. Its activity is regulated as follows. Allosterically activated by fructose 1,6-bisphosphate (FBP). In terms of biological role, catalyzes the conversion of lactate to pyruvate. The chain is L-lactate dehydrogenase from Borrelia turicatae (strain 91E135).